A 146-amino-acid polypeptide reads, in one-letter code: Small ribosomal subunit protein uS5 (146 aa).

The region spanning 8-71 (FEESIVNIGR…DNAFKNLSKV (64 aa)) is the S5 DRBM domain.

The protein belongs to the universal ribosomal protein uS5 family. Part of the 30S ribosomal subunit. Contacts proteins S4 and S8.

In terms of biological role, with S4 and S12 plays an important role in translational accuracy. Functionally, located at the back of the 30S subunit body where it stabilizes the conformation of the head with respect to the body. The chain is Small ribosomal subunit protein uS5 from Sulfurimonas denitrificans (strain ATCC 33889 / DSM 1251) (Thiomicrospira denitrificans (strain ATCC 33889 / DSM 1251)).